Here is a 163-residue protein sequence, read N- to C-terminus: NADH-quinone oxidoreductase subunit I (163 aa).

4Fe-4S ferredoxin-type domains are found at residues 53–83 (LRRY…IEAG) and 94–123 (VRYD…EGPN). Residues Cys-63, Cys-66, Cys-69, Cys-73, Cys-103, Cys-106, Cys-109, and Cys-113 each coordinate [4Fe-4S] cluster.

This sequence belongs to the complex I 23 kDa subunit family. In terms of assembly, NDH-1 is composed of 14 different subunits. Subunits NuoA, H, J, K, L, M, N constitute the membrane sector of the complex. Requires [4Fe-4S] cluster as cofactor.

Its subcellular location is the cell inner membrane. The catalysed reaction is a quinone + NADH + 5 H(+)(in) = a quinol + NAD(+) + 4 H(+)(out). NDH-1 shuttles electrons from NADH, via FMN and iron-sulfur (Fe-S) centers, to quinones in the respiratory chain. The immediate electron acceptor for the enzyme in this species is believed to be ubiquinone. Couples the redox reaction to proton translocation (for every two electrons transferred, four hydrogen ions are translocated across the cytoplasmic membrane), and thus conserves the redox energy in a proton gradient. In Bartonella tribocorum (strain CIP 105476 / IBS 506), this protein is NADH-quinone oxidoreductase subunit I.